The sequence spans 84 residues: Small ribosomal subunit protein bS16 (84 aa).

The protein belongs to the bacterial ribosomal protein bS16 family.

This Paraburkholderia phymatum (strain DSM 17167 / CIP 108236 / LMG 21445 / STM815) (Burkholderia phymatum) protein is Small ribosomal subunit protein bS16.